A 421-amino-acid chain; its full sequence is Bone morphogenetic protein 10 (421 aa).

A signal peptide spans 1–21; that stretch reads MGSLVLPLSAVFCLVAHSASG. The propeptide occupies 22–313; it reads SPIMGLEQSP…IDDSSARIRR (292 aa). N-linked (GlcNAc...) asparagine glycans are attached at residues N67 and N131. Intrachain disulfides connect C320–C386, C349–C418, and C353–C420.

Belongs to the TGF-beta family. Homodimer; disulfide-linked. Interacts with FBN1 (via N-terminal domain) and FBN2. Interacts with ENG. As to expression, in the embryo, expressed exclusively in the ventricular trabecular myocardium of the developing heart from 9.0 dpc-13.5 dpc. By 16.5 dpc-18.5 dpc, only detectable in atria. Highly expressed in the adult heart where it is found in the right atrium but not in the left atrium. Lower levels in adult liver and lung.

Its subcellular location is the secreted. In terms of biological role, required for maintaining the proliferative activity of embryonic cardiomyocytes by preventing premature activation of the negative cell cycle regulator CDKN1C/p57KIP and maintaining the required expression levels of cardiogenic factors such as MEF2C and NKX2-5. Acts as a ligand for ACVRL1/ALK1, BMPR1A/ALK3 and BMPR1B/ALK6, leading to activation of SMAD1, SMAD5 and SMAD8 transcription factors. Inhibits endothelial cell migration and growth. May reduce cell migration and cell matrix adhesion in breast cancer cell lines. The sequence is that of Bone morphogenetic protein 10 (Bmp10) from Mus musculus (Mouse).